The primary structure comprises 264 residues: Na(+)-translocating NADH-quinone reductase subunit E (264 aa).

Helical transmembrane passes span 11 to 31 (VFGI…NFLG), 50 to 70 (MSVA…HTFI), 90 to 110 (FLEL…LELL), 123 to 143 (GIFL…LFGI), 149 to 169 (FIPM…AIVL), and 189 to 209 (MGIS…LTGI).

The protein belongs to the NqrDE/RnfAE family. As to quaternary structure, composed of six subunits; NqrA, NqrB, NqrC, NqrD, NqrE and NqrF.

It is found in the cell inner membrane. It carries out the reaction a ubiquinone + n Na(+)(in) + NADH + H(+) = a ubiquinol + n Na(+)(out) + NAD(+). Its function is as follows. NQR complex catalyzes the reduction of ubiquinone-1 to ubiquinol by two successive reactions, coupled with the transport of Na(+) ions from the cytoplasm to the periplasm. NqrA to NqrE are probably involved in the second step, the conversion of ubisemiquinone to ubiquinol. The sequence is that of Na(+)-translocating NADH-quinone reductase subunit E from Chlamydia caviae (strain ATCC VR-813 / DSM 19441 / 03DC25 / GPIC) (Chlamydophila caviae).